Here is a 317-residue protein sequence, read N- to C-terminus: Cytochrome f (317 aa).

A signal peptide spans 1-34; sequence MKGLKNQIMKKTSLFICTLLFISSIVFHPKITFA. Heme contacts are provided by tyrosine 35, cysteine 55, cysteine 58, and histidine 59. Residues 284–304 form a helical membrane-spanning segment; the sequence is VIGLIAFFIGVGLTQILLVLK.

It belongs to the cytochrome f family. In terms of assembly, the 4 large subunits of the cytochrome b6-f complex are cytochrome b6, subunit IV (17 kDa polypeptide, PetD), cytochrome f and the Rieske protein, while the 4 small subunits are PetG, PetL, PetM and PetN. The complex functions as a dimer. It depends on heme as a cofactor.

It localises to the cellular thylakoid membrane. In terms of biological role, component of the cytochrome b6-f complex, which mediates electron transfer between photosystem II (PSII) and photosystem I (PSI), cyclic electron flow around PSI, and state transitions. The protein is Cytochrome f of Prochlorococcus marinus (strain MIT 9301).